The following is a 447-amino-acid chain: Cysteine--tRNA ligase (447 aa).

Cys-28 lines the Zn(2+) pocket. Positions 30-40 match the 'HIGH' region motif; sequence PTVYNYIHIGN. The Zn(2+) site is built by Cys-211, His-236, and Glu-240. Residues 268–272 carry the 'KMSKS' region motif; it reads KMSKS. Lys-271 contacts ATP.

It belongs to the class-I aminoacyl-tRNA synthetase family. As to quaternary structure, monomer. It depends on Zn(2+) as a cofactor.

It localises to the cytoplasm. It carries out the reaction tRNA(Cys) + L-cysteine + ATP = L-cysteinyl-tRNA(Cys) + AMP + diphosphate. The polypeptide is Cysteine--tRNA ligase (Streptococcus pyogenes serotype M1).